Consider the following 311-residue polypeptide: Porphobilinogen deaminase (311 aa).

Residue Cys-241 is modified to S-(dipyrrolylmethanemethyl)cysteine.

Belongs to the HMBS family. Monomer. Requires dipyrromethane as cofactor.

It catalyses the reaction 4 porphobilinogen + H2O = hydroxymethylbilane + 4 NH4(+). It functions in the pathway porphyrin-containing compound metabolism; protoporphyrin-IX biosynthesis; coproporphyrinogen-III from 5-aminolevulinate: step 2/4. Tetrapolymerization of the monopyrrole PBG into the hydroxymethylbilane pre-uroporphyrinogen in several discrete steps. This is Porphobilinogen deaminase from Geobacillus sp. (strain WCH70).